Here is a 57-residue protein sequence, read N- to C-terminus: Probable mRNA interferase HicA 1 (57 aa).

The protein belongs to the HicA mRNA interferase family. In terms of assembly, probably forms a complex with the cognate antitoxin HicB 1 which inhibits the mRNA interferase activity.

Toxic component of a type II toxin-antitoxin (TA) system. A probable translation-independent mRNA interferase. The protein is Probable mRNA interferase HicA 1 (hicA1) of Photorhabdus laumondii subsp. laumondii (strain DSM 15139 / CIP 105565 / TT01) (Photorhabdus luminescens subsp. laumondii).